The following is a 1222-amino-acid chain: ATP-dependent helicase/nuclease subunit A (1222 aa).

The UvrD-like helicase ATP-binding domain occupies 39–495 (QKRTAQQIEA…ILLKENFRSQ (457 aa)). 60 to 67 (ASAGSGKT) serves as a coordination point for ATP. The region spanning 524–810 (QLIAGSHAQT…NLMTIHKSKG (287 aa)) is the UvrD-like helicase C-terminal domain.

Belongs to the helicase family. AddA subfamily. As to quaternary structure, heterodimer of AddA and AddB/RexB. Requires Mg(2+) as cofactor.

It carries out the reaction Couples ATP hydrolysis with the unwinding of duplex DNA by translocating in the 3'-5' direction.. The catalysed reaction is ATP + H2O = ADP + phosphate + H(+). Its function is as follows. The heterodimer acts as both an ATP-dependent DNA helicase and an ATP-dependent, dual-direction single-stranded exonuclease. Recognizes the chi site generating a DNA molecule suitable for the initiation of homologous recombination. The AddA nuclease domain is required for chi fragment generation; this subunit has the helicase and 3' -&gt; 5' nuclease activities. The sequence is that of ATP-dependent helicase/nuclease subunit A from Streptococcus pyogenes serotype M49 (strain NZ131).